The primary structure comprises 305 residues: Popeye domain-containing protein 3 (305 aa).

Residue Asn4 is glycosylated (N-linked (GlcNAc...) asparagine). The next 3 membrane-spanning stretches (helical) occupy residues 34-54 (SILF…LYVF), 55-75 (SLLG…VCAA), and 77-99 (IFSW…TYQV). The disordered stretch occupies residues 273–305 (PETPPVPPPRRLQRRSSGRPRPGVPNCSSPRKQ). N-linked (GlcNAc...) asparagine glycosylation occurs at Asn298.

The protein belongs to the popeye family. In terms of tissue distribution, expressed first preferentially in atrium and later also in the subepicardial compact layer of the ventricles.

The protein resides in the membrane. May play a role in the maintenance of heart function mediated, at least in part, through cAMP-binding. May play a role in the regulation of KCNK2-mediated current amplitude. The sequence is that of Popeye domain-containing protein 3 (POPDC3) from Gallus gallus (Chicken).